The following is a 258-amino-acid chain: Tryptophan synthase alpha chain (258 aa).

Residues Glu-47 and Asp-58 each act as proton acceptor in the active site.

Belongs to the TrpA family. Tetramer of two alpha and two beta chains.

The catalysed reaction is (1S,2R)-1-C-(indol-3-yl)glycerol 3-phosphate + L-serine = D-glyceraldehyde 3-phosphate + L-tryptophan + H2O. It functions in the pathway amino-acid biosynthesis; L-tryptophan biosynthesis; L-tryptophan from chorismate: step 5/5. Its function is as follows. The alpha subunit is responsible for the aldol cleavage of indoleglycerol phosphate to indole and glyceraldehyde 3-phosphate. This is Tryptophan synthase alpha chain from Bacillus cereus (strain ATCC 10987 / NRS 248).